We begin with the raw amino-acid sequence, 101 residues long: Urease subunit beta (101 aa).

The protein belongs to the urease beta subunit family. Heterotrimer of UreA (gamma), UreB (beta) and UreC (alpha) subunits. Three heterotrimers associate to form the active enzyme.

Its subcellular location is the cytoplasm. It carries out the reaction urea + 2 H2O + H(+) = hydrogencarbonate + 2 NH4(+). It functions in the pathway nitrogen metabolism; urea degradation; CO(2) and NH(3) from urea (urease route): step 1/1. The chain is Urease subunit beta from Bradyrhizobium diazoefficiens (strain JCM 10833 / BCRC 13528 / IAM 13628 / NBRC 14792 / USDA 110).